A 154-amino-acid polypeptide reads, in one-letter code: Immunity protein YwqK (154 aa).

As to quaternary structure, probably interacts with cognate toxin YwqJ but not with other non-cognate LXG toxins. The interaction inhibits the toxic activity of YwqJ.

The protein localises to the cytoplasm. Functionally, immunity component of one of 6 LXG toxin-immunity modules in this strain. They promote kin selection, mediate competition in biofilms, and drive spatial segregation of different strains, indicating that LXG toxins may help avoid warfare between strains in biofilms. Mediates intercellular competition during biofilm formation; disruption of the operon disadvantages the bacteria, but overexpression of the cognate immunity protein restores growth in competition with wild-type. In situ neutralizes the toxic effect of cognate toxin YqcG. Probably neutralizes the ability to inhibit growth of cognate toxin YwqJ. Probably does not have immunity protein activity on other LXG toxins. This is Immunity protein YwqK (ywqK) from Bacillus subtilis (strain 168).